Here is a 214-residue protein sequence, read N- to C-terminus: Exosome complex component RRP46 homolog (214 aa).

It belongs to the RNase PH family. As to quaternary structure, homodimer. Component of the RNA exosome complex. Interacts with crn-4; interaction promotes the DNase activity of crn-4. Interacts with crn-3, cps-6 and cyn-13.

It localises to the cytoplasm. It is found in the nucleus. Its function is as follows. Non-catalytic component of the RNA exosome complex which has 3'-&gt;5' exoribonuclease activity and participates in a multitude of cellular RNA processing and degradation events. Involved in apoptotic DNA degradation. In vitro, does not bind or digest single-stranded RNA. In vitro, binds to double-stranded DNA without detectable DNase activity. The polypeptide is Exosome complex component RRP46 homolog (Caenorhabditis elegans).